The following is a 444-amino-acid chain: Phosphoglucosamine mutase (444 aa).

Serine 102 serves as the catalytic Phosphoserine intermediate. Mg(2+) contacts are provided by serine 102, aspartate 241, aspartate 243, and aspartate 245. Serine 102 is modified (phosphoserine).

It belongs to the phosphohexose mutase family. It depends on Mg(2+) as a cofactor. In terms of processing, activated by phosphorylation.

The enzyme catalyses alpha-D-glucosamine 1-phosphate = D-glucosamine 6-phosphate. Its function is as follows. Catalyzes the conversion of glucosamine-6-phosphate to glucosamine-1-phosphate. This Leptothrix cholodnii (strain ATCC 51168 / LMG 8142 / SP-6) (Leptothrix discophora (strain SP-6)) protein is Phosphoglucosamine mutase.